Consider the following 36-residue polypeptide: Photosystem II reaction center protein M (36 aa).

Residues 7-27 (GFVASLMFVLVPTVFLIVLFI) form a helical membrane-spanning segment.

The protein belongs to the PsbM family. In terms of assembly, PSII is composed of 1 copy each of membrane proteins PsbA, PsbB, PsbC, PsbD, PsbE, PsbF, PsbH, PsbI, PsbJ, PsbK, PsbL, PsbM, PsbT, PsbX, PsbY, PsbZ, Psb30/Ycf12, peripheral proteins PsbO, CyanoQ (PsbQ), PsbU, PsbV and a large number of cofactors. It forms dimeric complexes.

The protein localises to the cellular thylakoid membrane. In terms of biological role, one of the components of the core complex of photosystem II (PSII). PSII is a light-driven water:plastoquinone oxidoreductase that uses light energy to abstract electrons from H(2)O, generating O(2) and a proton gradient subsequently used for ATP formation. It consists of a core antenna complex that captures photons, and an electron transfer chain that converts photonic excitation into a charge separation. This subunit is found at the monomer-monomer interface. This is Photosystem II reaction center protein M from Synechococcus sp. (strain CC9311).